A 489-amino-acid polypeptide reads, in one-letter code: NAC domain-containing protein 74 (489 aa).

An NAC domain is found at 9 to 159; sequence LPPGFGFHPK…AYVLCRITKR (151 aa). Residues 108 to 165 mediate DNA binding; sequence IGTKKTLVFHEGRPPTGRRTEWIMHEYYIDERECQACPDMKDAYVLCRITKRNDWIPG. Residues 413 to 427 show a composition bias toward basic and acidic residues; the sequence is KNQAHDVASTKRSDA. The segment at 413-435 is disordered; it reads KNQAHDVASTKRSDAGKPSTELS. The helical transmembrane segment at 456–476 threads the bilayer; that stretch reads WNMILVAGFAIGVAVVALHIG.

In terms of tissue distribution, widely expressed.

It localises to the nucleus. The protein localises to the cell membrane. Transcription activator involved in heat and endoplasmic reticulum (ER) stress responses. Regulates the expression of genes involved in ER protein folding and heat stress-responsive genes. Binds directly to the promoter of BZIP74 and regulates its expression in response to heat stress. This Oryza sativa subsp. japonica (Rice) protein is NAC domain-containing protein 74.